We begin with the raw amino-acid sequence, 921 residues long: MRSLLFVLSLICFCSQTALSWKKEEFRSCDQTPFCKRARSRTPGACSLIVGDVSITDGDLVAKLLPKAPNQGDGDQIKPLILSLSVYKDGIVRLKIDEDHSLNPPKKRFQVPDVVVSEFEEKKIWLQKVATETISGDTSPSSVVYVSDGYEAVVRHDPFEVYVREKSGDRRRVVSLNSHGLFDFEQLGRKTEGDNWEEKFRTHTDSRPSGPQSISFDVSFYDSSFVYGIPEHATSFALKPTKGPGVEESEPYRLFNLDVFEYDHESPFGLYGSIPFMVSHGKSGKTSGFFWLNAAEMQIDVLANGWDAESGISLPSSHSRIDTFWMSEAGIVDTFFFVGPEPKDVVKQYASVTGTSAMPQLFATGYHQCRWNYKDEEDVAQVDSKFDEHDIPYDVLWLDIEHTDGKRYFTWDSVLFPHPEEMQKKLAAKGRKMVTIVDPHIKRDDSYFLHKEATQMGYYVKDSSGKDFDGWCWPGSSSYIDMLSPEIRKWWGGRFSYKNYVGSTPSLYTWNDMNEPSVFNGPEVTMPRDALHVGGVEHREVHNAYGYYFHMATSDGLVMREEGKDRPFVLSRAIFPGTQRYGAIWTGDNTAEWEHLRVSIPMILTLGLTGITFSGADIGGFFGNPEPELLVRWYQVGAYYPFFRGHAHHDTKRREPWLFGERNTELMRDAIHTRYTLLPYFYTLFREANVTGVPVVRPLWMEFPQDEATFSNDEAFMVGSGLLVQGVYTKGTTQASVYLPGKESWYDLRNGKTYVGGKTHKMDAPEESIPAFQKAGTIIPRKDRFRRSSSQMDNDPYTLVVALNSSQEAEGELYIDDGKSFEFRRGSYIHRRFVFSKGVLTSTNLAPPEARLSSQCLIDRIILLGHSSGPKSALVEPLNQKAEIEMGPLRMGGLVASSGTKVLTIRKPGVRVDQDWTVKIL.

The signal sequence occupies residues 1-20 (MRSLLFVLSLICFCSQTALS). The active-site Nucleophile is D512. E515 is an active-site residue. D588 acts as the Proton donor in catalysis. 2 N-linked (GlcNAc...) asparagine glycosylation sites follow: N689 and N804.

The protein belongs to the glycosyl hydrolase 31 family. As to quaternary structure, heterodimer of a catalytic alpha subunit (PSL5) and a beta subunit (PSL4). As to expression, expressed in roots, rosette leaves, leaf blades, mature stems, cauline leaves, flower buds, flowers and siliques.

The protein resides in the endoplasmic reticulum. It carries out the reaction Hydrolysis of terminal (1-&gt;3)-alpha-D-glucosidic links in (1-&gt;3)-alpha-D-glucans.. The protein operates within glycan metabolism; N-glycan metabolism. Cleaves sequentially the 2 innermost alpha-1,3-linked glucose residues from the Glc(2)Man(9)GlcNAc(2) oligosaccharide precursor of immature glycoproteins. Essential for stable accumulation of the receptor EFR that determines the specific perception of bacterial elongation factor Tu (EF-Tu), a potent elicitor of the defense response to pathogen-associated molecular patterns (PAMPs). Required for sustained activation of EFR-mediated signaling, but not receptor FLS2-mediated signaling elicited by the bacterial flagellin flg22. The polypeptide is Probable glucan 1,3-alpha-glucosidase (PSL5) (Arabidopsis thaliana (Mouse-ear cress)).